Consider the following 328-residue polypeptide: GMP reductase (328 aa).

The active-site Thioimidate intermediate is the Cys-176. 205–228 (IIADGGIRTHGDIAKSIRFGASMV) provides a ligand contact to NADP(+).

It belongs to the IMPDH/GMPR family. GuaC type 2 subfamily.

The catalysed reaction is IMP + NH4(+) + NADP(+) = GMP + NADPH + 2 H(+). Catalyzes the irreversible NADPH-dependent deamination of GMP to IMP. It functions in the conversion of nucleobase, nucleoside and nucleotide derivatives of G to A nucleotides, and in maintaining the intracellular balance of A and G nucleotides. The polypeptide is GMP reductase (Streptococcus pneumoniae (strain Hungary19A-6)).